The following is a 138-amino-acid chain: Nanos homolog 2 (138 aa).

The tract at residues Glu-31–Ala-55 is disordered. A Nanos-type zinc finger spans residues Leu-62–Leu-116. Residues Cys-63, Cys-66, His-79, Cys-90, Cys-98, Cys-101, His-109, and Cys-114 each coordinate Zn(2+). 2 short sequence motifs (C2HC) span residues Cys-63 to Cys-90 and Cys-98 to Cys-114.

The protein belongs to the nanos family. As to quaternary structure, interacts with CNOT1, CNOT3, CNOT6L, CNOT7 and CNOT9. Testis and ovary. Expression found in several spermatogenic stages: in cells on the periphery of the tubules which could correspond to spermatogonia, in spermatocytes and in round spermatids (at protein level).

The protein localises to the cytoplasm. It is found in the P-body. The protein resides in the perinuclear region. Functionally, plays a key role in the sexual differentiation of germ cells by promoting the male fate but suppressing the female fate. Represses the female fate pathways by suppressing meiosis, which in turn results in the promotion of the male fate. Maintains the suppression of meiosis by preventing STRA8 expression, which is required for premeiotic DNA replication, after CYP26B1 is decreased. Regulates the localization of the CCR4-NOT deadenylation complex to P-bodies and plays a role in recruiting the complex to trigger the degradation of mRNAs involved in meiosis. Required for the maintenance of the spermatogonial stem cell population. Not essential for the assembly of P-bodies but is required for the maintenance of their normal state. The sequence is that of Nanos homolog 2 (NANOS2) from Homo sapiens (Human).